A 322-amino-acid chain; its full sequence is NADH-cytochrome b5 reductase 2 (322 aa).

The chain crosses the membrane as a helical span at residues 30–46 (LAPVYVAVGLAGLGVGL). Positions 71–176 (QGWVNLKLSD…KGPLPKYPWE (106 aa)) constitute an FAD-binding FR-type domain. 179 to 214 (KHKHICLVAGGTGITPMYQLAREIFKNPEDKTKVTL) is a binding site for FAD.

This sequence belongs to the flavoprotein pyridine nucleotide cytochrome reductase family. The cofactor is FAD.

The protein localises to the mitochondrion outer membrane. The catalysed reaction is 2 Fe(III)-[cytochrome b5] + NADH = 2 Fe(II)-[cytochrome b5] + NAD(+) + H(+). Functionally, may mediate the reduction of outer membrane cytochrome b5. The polypeptide is NADH-cytochrome b5 reductase 2 (mcr1) (Emericella nidulans (strain FGSC A4 / ATCC 38163 / CBS 112.46 / NRRL 194 / M139) (Aspergillus nidulans)).